Here is a 436-residue protein sequence, read N- to C-terminus: Mitochondrial distribution and morphology protein 12 (436 aa).

The region spanning 1 to 436 is the SMP-LTD domain; that stretch reads MSIEVNWGTA…VFPSFYTFLI (436 aa). Residues 73–84 are compositionally biased toward acidic residues; it reads DEDGDSGSEISE. Disordered regions lie at residues 73-98, 184-275, and 352-380; these read DEDGDSGSEISEELQHRTHDNPWDRT, AVAG…RMRE, and GSGSYSGQQETPGPSTGSSGGGNPSPHQK. The span at 85–98 shows a compositional bias: basic and acidic residues; the sequence is ELQHRTHDNPWDRT. Composition is skewed to polar residues over residues 190-206 and 222-243; these read PFTTNWTDPSPMGQGNK and DSSNPASRPSTASTHPSGSNRS. The span at 244–255 shows a compositional bias: basic and acidic residues; the sequence is SHPDGHPEHNDD. A compositionally biased stretch (polar residues) spans 256–267; that stretch reads PISSSENPLLQN.

Belongs to the MDM12 family. Component of the ER-mitochondria encounter structure (ERMES) or MDM complex, composed of mmm1, mdm10, mdm12 and mdm34. A mmm1 homodimer associates with one molecule of mdm12 on each side in a pairwise head-to-tail manner, and the SMP-LTD domains of mmm1 and mdm12 generate a continuous hydrophobic tunnel for phospholipid trafficking.

It is found in the mitochondrion outer membrane. It localises to the endoplasmic reticulum membrane. Component of the ERMES/MDM complex, which serves as a molecular tether to connect the endoplasmic reticulum (ER) and mitochondria. Components of this complex are involved in the control of mitochondrial shape and protein biogenesis, and function in nonvesicular lipid trafficking between the ER and mitochondria. Mdm12 is required for the interaction of the ER-resident membrane protein mmm1 and the outer mitochondrial membrane-resident beta-barrel protein mdm10. The mdm12-mmm1 subcomplex functions in the major beta-barrel assembly pathway that is responsible for biogenesis of all mitochondrial outer membrane beta-barrel proteins, and acts in a late step after the SAM complex. The mdm10-mdm12-mmm1 subcomplex further acts in the TOM40-specific pathway after the action of the mdm12-mmm1 complex. Essential for establishing and maintaining the structure of mitochondria and maintenance of mtDNA nucleoids. The chain is Mitochondrial distribution and morphology protein 12 from Emericella nidulans (strain FGSC A4 / ATCC 38163 / CBS 112.46 / NRRL 194 / M139) (Aspergillus nidulans).